The primary structure comprises 470 residues: Methylenetetrahydrofolate--tRNA-(uracil-5-)-methyltransferase TrmFO (470 aa).

Glycine 10–glycine 15 serves as a coordination point for FAD.

It belongs to the MnmG family. TrmFO subfamily. The cofactor is FAD.

Its subcellular location is the cytoplasm. It carries out the reaction uridine(54) in tRNA + (6R)-5,10-methylene-5,6,7,8-tetrahydrofolate + NADH + H(+) = 5-methyluridine(54) in tRNA + (6S)-5,6,7,8-tetrahydrofolate + NAD(+). It catalyses the reaction uridine(54) in tRNA + (6R)-5,10-methylene-5,6,7,8-tetrahydrofolate + NADPH + H(+) = 5-methyluridine(54) in tRNA + (6S)-5,6,7,8-tetrahydrofolate + NADP(+). In terms of biological role, catalyzes the folate-dependent formation of 5-methyl-uridine at position 54 (M-5-U54) in all tRNAs. In Prochlorococcus marinus (strain MIT 9312), this protein is Methylenetetrahydrofolate--tRNA-(uracil-5-)-methyltransferase TrmFO.